Reading from the N-terminus, the 136-residue chain is Small ribosomal subunit protein uS19 (136 aa).

Belongs to the universal ribosomal protein uS19 family.

In terms of biological role, protein S19 forms a complex with S13 that binds strongly to the 16S ribosomal RNA. In Methanothrix thermoacetophila (strain DSM 6194 / JCM 14653 / NBRC 101360 / PT) (Methanosaeta thermophila), this protein is Small ribosomal subunit protein uS19.